The following is a 389-amino-acid chain: Protein Wnt-10b (389 aa).

An N-terminal signal peptide occupies residues 1–28; that stretch reads MLEEPRPRPPPSGLAGLLFLALCSRALS. Residue Thr46 is modified to Phosphothreonine. 11 disulfides stabilise this stretch: Cys83-Cys94, Cys136-Cys144, Cys146-Cys199, Cys247-Cys261, Cys249-Cys256, Cys318-Cys349, Cys334-Cys344, Cys348-Cys388, Cys364-Cys379, Cys366-Cys376, and Cys371-Cys372. The N-linked (GlcNAc...) asparagine glycan is linked to Asn93. A disordered region spans residues 171-197; the sequence is KSFPHSLPSPGPGSSPSPGPQDTWEWG. The span at 177–189 shows a compositional bias: pro residues; it reads LPSPGPGSSPSPG. Residue Ser253 is the site of O-palmitoleoyl serine; by PORCN attachment. N-linked (GlcNAc...) asparagine glycosylation occurs at Asn335.

It belongs to the Wnt family. As to quaternary structure, forms a soluble 1:1 complex with AFM; this prevents oligomerization and is required for prolonged biological activity. The complex with AFM may represent the physiological form in body fluids. Post-translationally, palmitoleoylation is required for efficient binding to frizzled receptors. Depalmitoleoylation leads to Wnt signaling pathway inhibition. As to expression, detected in most adult tissues. Highest levels were found in heart and skeletal muscle. Low levels are found in brain.

It is found in the secreted. It localises to the extracellular space. The protein localises to the extracellular matrix. Its function is as follows. Member of the Wnt ligand gene family that encodes for secreted proteins, which activate the Wnt signaling cascade. Specifically activates canonical Wnt/beta-catenin signaling and thus triggers beta-catenin/LEF/TCF-mediated transcriptional programs. Involved in signaling networks controlling stemness, pluripotency and cell fate decisions. Acts in the immune system, mammary gland, adipose tissue, bone and skin. In Homo sapiens (Human), this protein is Protein Wnt-10b (WNT10B).